Here is a 300-residue protein sequence, read N- to C-terminus: Ribosomal RNA small subunit methyltransferase A (300 aa).

Residues N36, V38, G63, E84, D113, and N131 each contribute to the S-adenosyl-L-methionine site.

This sequence belongs to the class I-like SAM-binding methyltransferase superfamily. rRNA adenine N(6)-methyltransferase family. RsmA subfamily.

The protein resides in the cytoplasm. The catalysed reaction is adenosine(1518)/adenosine(1519) in 16S rRNA + 4 S-adenosyl-L-methionine = N(6)-dimethyladenosine(1518)/N(6)-dimethyladenosine(1519) in 16S rRNA + 4 S-adenosyl-L-homocysteine + 4 H(+). Specifically dimethylates two adjacent adenosines (A1518 and A1519) in the loop of a conserved hairpin near the 3'-end of 16S rRNA in the 30S particle. May play a critical role in biogenesis of 30S subunits. The protein is Ribosomal RNA small subunit methyltransferase A of Kineococcus radiotolerans (strain ATCC BAA-149 / DSM 14245 / SRS30216).